The sequence spans 397 residues: Exodeoxyribonuclease 7 large subunit (397 aa).

It belongs to the XseA family. In terms of assembly, heterooligomer composed of large and small subunits.

The protein resides in the cytoplasm. It catalyses the reaction Exonucleolytic cleavage in either 5'- to 3'- or 3'- to 5'-direction to yield nucleoside 5'-phosphates.. Functionally, bidirectionally degrades single-stranded DNA into large acid-insoluble oligonucleotides, which are then degraded further into small acid-soluble oligonucleotides. This chain is Exodeoxyribonuclease 7 large subunit, found in Anaplasma marginale (strain St. Maries).